The primary structure comprises 507 residues: ATP synthase subunit alpha, chloroplastic (507 aa).

170-177 (GDRQTGKT) is an ATP binding site. Phosphothreonine is present on threonine 257.

It belongs to the ATPase alpha/beta chains family. F-type ATPases have 2 components, CF(1) - the catalytic core - and CF(0) - the membrane proton channel. CF(1) has five subunits: alpha(3), beta(3), gamma(1), delta(1), epsilon(1). CF(0) has four main subunits: a, b, b' and c.

The protein resides in the plastid. It is found in the chloroplast thylakoid membrane. It carries out the reaction ATP + H2O + 4 H(+)(in) = ADP + phosphate + 5 H(+)(out). Functionally, produces ATP from ADP in the presence of a proton gradient across the membrane. The alpha chain is a regulatory subunit. This is ATP synthase subunit alpha, chloroplastic from Arabis hirsuta (Hairy rock-cress).